Here is a 201-residue protein sequence, read N- to C-terminus: MFSRWMEDKGVSRVTSSNLRFSLIETSAALVIKSSVKPILIAASDFMEQGTTIIPSCWKDPDEMHAETSRTEYVLVAKAATSCGSQSVSYFIVAAPHFEITKWVSTLNSFSTCRSLIPSATPVAPVIATTILFGLGGEVDALVTSFDSLCVRKDGEVVMVLPSKGKLAKMPVVLKKAILVLLGNRSISTQLKLLNALDSVD.

This is an uncharacterized protein from Saccharomyces cerevisiae (strain ATCC 204508 / S288c) (Baker's yeast).